Here is a 499-residue protein sequence, read N- to C-terminus: Patatin-like protein 6 (499 aa).

Residues 111 to 314 form the PNPLA domain; it reads LSIDSGGMRG…AMSNPTAAAI (204 aa). The GGXR signature appears at 116–119; sequence GGMR. Serine 155 acts as the Nucleophile in catalysis. Residue aspartate 301 is the Proton acceptor of the active site. The DGA/G signature appears at 301 to 303; the sequence is DGG.

Belongs to the patatin family. In terms of tissue distribution, highly expressed in siliques and at lower levels in roots and flowers.

In terms of biological role, possesses non-specific lipolytic acyl hydrolase (LAH) activity. Hydrolyzes phospholipids as well as galactolipids. May play a role in disease resistance. The polypeptide is Patatin-like protein 6 (PLP6) (Arabidopsis thaliana (Mouse-ear cress)).